The following is a 469-amino-acid chain: MTPKDVLQIIKEKEVRYVDLRFADTRGKEQHVTVPASTIDEAAFEEGKMFDGSSIAGWKGINESDMILMPDASTAVMDPFFDDPTLILRCDIVEPATMQGYERDPRSIAKRAEAYMKSTGIADTALFGPENEFFIFDDVRWGANMSGSFYKVDSEEAGWNSEKVYEDGNIGHRPGVKGGYFPVPPVDSFQDLRSAMCNTLEDMGMVVEVHHHEVATAGQCEIGVRCNTLVKKADEVLLLKYAVQNVAHAYGKTATFMPKPLVGDNGNGMHVHQSLAKDGKNLFSGDLYGGLSETALHYIGGIIKHAKALNAFCNASTNSYKRLVPGFEAPVMLAYSARNRSASIRIPYVMNPKARRIEVRFPDSTANPYLAFAAMLMAGLDGIQNKIHPGDAMDKDLYDLPPEEEKAIPQVCYSFDQALEALDKDREFLTRGGVFTDDMIDAYLDLKGQEVTRLRMSTHPVEFDMYYSL.

A GS beta-grasp domain is found at 13–97 (KEVRYVDLRF…LRCDIVEPAT (85 aa)). The region spanning 105–469 (PRSIAKRAEA…PVEFDMYYSL (365 aa)) is the GS catalytic domain. Positions 130 and 132 each coordinate Mg(2+). Residue E208 coordinates ATP. Mg(2+) is bound by residues E213 and E221. L-glutamate-binding positions include 265 to 266 (NG) and G266. H270 contributes to the Mg(2+) binding site. Residues 272-274 (HQS) and S274 each bind ATP. L-glutamate-binding residues include R322, E328, and R340. Residues R340, R345, and K353 each contribute to the ATP site. Residue E358 coordinates Mg(2+). R360 is a binding site for L-glutamate. Y398 is subject to O-AMP-tyrosine.

The protein belongs to the glutamine synthetase family. In terms of assembly, oligomer of 12 subunits arranged in the form of two hexameric ring. It depends on Mg(2+) as a cofactor.

The protein resides in the cytoplasm. It catalyses the reaction L-glutamate + NH4(+) + ATP = L-glutamine + ADP + phosphate + H(+). With respect to regulation, the activity of this enzyme could be controlled by adenylation under conditions of abundant glutamine. Functionally, catalyzes the ATP-dependent biosynthesis of glutamine from glutamate and ammonia. The sequence is that of Glutamine synthetase from Methylococcus capsulatus (strain ATCC 33009 / NCIMB 11132 / Bath).